A 386-amino-acid chain; its full sequence is Coproporphyrinogen-III oxidase 1, chloroplastic (386 aa).

The transit peptide at 1–48 directs the protein to the chloroplast; sequence MASHSSTLLSSPTFAPFSSHRLHYSPNPSTLRFSRPIRNKPNLALRCS. The important for dimerization stretch occupies residues 125–134; sequence VLQDGNVFEK. Residue Ser-174 coordinates substrate. Residue His-188 is the Proton donor of the active site. Substrate contacts are provided by residues 190–192 and 344–349; these read NYR and GGRIES. An important for dimerization region spans residues 326–361; it reads YVEFNLVYDRGTTFGLKTGGRIESILVSLPLSARWE.

Belongs to the aerobic coproporphyrinogen-III oxidase family. As to quaternary structure, homodimer. In terms of tissue distribution, expressed in cotyledons, leaves and roots.

Its subcellular location is the plastid. It is found in the chloroplast. The enzyme catalyses coproporphyrinogen III + O2 + 2 H(+) = protoporphyrinogen IX + 2 CO2 + 2 H2O. It functions in the pathway porphyrin-containing compound metabolism; protoporphyrin-IX biosynthesis; protoporphyrinogen-IX from coproporphyrinogen-III (O2 route): step 1/1. Its pathway is porphyrin-containing compound metabolism; chlorophyll biosynthesis. In terms of biological role, key enzyme in heme biosynthesis. Catalyzes the oxidative decarboxylation of propionic acid side chains of rings A and B of coproporphyrinogen III. The sequence is that of Coproporphyrinogen-III oxidase 1, chloroplastic (CPX1) from Arabidopsis thaliana (Mouse-ear cress).